The chain runs to 321 residues: Tet-like dioxygenase 1 (321 aa).

One can recognise a Fe2OG dioxygenase domain in the interval 198–298 (DSYYALNNCL…RIGLVYFAHK (101 aa)). The 2-oxoglutarate site is built by N214 and R224. Fe cation contacts are provided by H229 and D231. Y242 serves as a coordination point for 2-oxoglutarate. H279 is a Fe cation binding site. Residue R289 coordinates 2-oxoglutarate. A substrate-binding site is contributed by Q310.

It depends on Fe(2+) as a cofactor.

It catalyses the reaction a 5-methyl-2'-deoxycytidine in DNA + 2-oxoglutarate + O2 = a 5-hydroxymethyl-2'-deoxycytidine in DNA + succinate + CO2. The catalysed reaction is a 5-hydroxymethyl-2'-deoxycytidine in DNA + 2-oxoglutarate + O2 = a 5-formyl-2'-deoxycytidine in DNA + succinate + CO2 + H2O. It carries out the reaction a 5-formyl-2'-deoxycytidine in DNA + 2-oxoglutarate + O2 = a 5-carboxyl-2'-deoxycytidine in DNA + succinate + CO2 + H(+). Dioxygenase that catalyzes the conversion of the modified genomic base 5-methylcytosine (5mC) into 5-hydroxymethylcytosine (5hmC), and thereby plays a role in active DNA demethylation. Also mediates subsequent conversion of 5hmC into 5-formylcytosine (5fC), and conversion of 5fC to 5-carboxylcytosine (5caC). This Naegleria gruberi (Amoeba) protein is Tet-like dioxygenase 1.